The chain runs to 500 residues: Cytochrome P450 2D14 (500 aa).

Cys-446 is a heme binding site.

Belongs to the cytochrome P450 family. Heme serves as cofactor.

The protein resides in the endoplasmic reticulum membrane. It localises to the microsome membrane. It carries out the reaction an organic molecule + reduced [NADPH--hemoprotein reductase] + O2 = an alcohol + oxidized [NADPH--hemoprotein reductase] + H2O + H(+). Its function is as follows. Cytochromes P450 are a group of heme-thiolate monooxygenases. In liver microsomes, this enzyme is involved in an NADPH-dependent electron transport pathway. It oxidizes a variety of structurally unrelated compounds, including steroids, fatty acids, and xenobiotics. This chain is Cytochrome P450 2D14 (CYP2D14), found in Bos taurus (Bovine).